We begin with the raw amino-acid sequence, 683 residues long: U4/U6 small nuclear ribonucleoprotein Prp3 (683 aa).

Residues 1-87 (MALSKRELDE…HSKSSSDRSR (87 aa)) enclose the PWI domain. The span at 73 to 107 (GRSSRHSKSSSDRSRKRDLKEVFGDDSEISKESSG) shows a compositional bias: basic and acidic residues. The disordered stretch occupies residues 73 to 135 (GRSSRHSKSS…IPGPPSESPG (63 aa)). A Glycyl lysine isopeptide (Lys-Gly) (interchain with G-Cter in SUMO2) cross-link involves residue K139. The disordered stretch occupies residues 153 to 183 (IEERKKQLSFISPPTPQPKTPSSSQPERLPI). S164 bears the Phosphoserine mark. Position 167 is a phosphothreonine (T167). Glycyl lysine isopeptide (Lys-Gly) (interchain with G-Cter in SUMO2) cross-links involve residues K244 and K252. Positions 416–550 (NLVEHPAQLN…VHISVYRVRN (135 aa)) are mediates interaction with SART3. S619 is modified (phosphoserine).

As to quaternary structure, component of the precatalytic spliceosome (spliceosome B complex). Component of the U4/U6-U5 tri-snRNP complex, a building block of the precatalytic spliceosome (spliceosome B complex). The U4/U6-U5 tri-snRNP complex is composed of the U4, U6 and U5 snRNAs and at least PRPF3, PRPF4, PRPF6, PRPF8, PRPF31, SNRNP200, TXNL4A, SNRNP40, SNRPB, SNRPD1, SNRPD2, SNRPD3, SNRPE, SNRPF, SNRPG, DDX23, CD2BP2, PPIH, SNU13, EFTUD2, SART1 and USP39, plus LSM2, LSM3, LSM4, LSM5, LSM6, LSM7 and LSM8. Interacts directly with PRPF4. Part of a heteromeric complex containing PPIH, PRPF3 and PRPF4 that is stable in the absence of RNA. Interacts with SART3; the interaction is direct and recruits the deubiquitinase USP4 to PRPF3. Interacts with PRPF19. Interacts ('Lys-63'-linked polyubiquitinated) with PRPF8 (via the MPN (JAB/Mov34) domain); may stabilize the U4/U6-U5 tri-snRNP complex. Interacts with ERCC6. In terms of processing, ubiquitinated. Undergoes 'Lys-63'-linked polyubiquitination by PRPF19 and deubiquitination by USP4. 'Lys-63'-linked ubiquitination increases the affinity for PRPF8 and may regulate the assembly of the U4/U6-U5 tri-snRNP complex.

The protein resides in the nucleus. Its subcellular location is the nucleus speckle. In terms of biological role, plays a role in pre-mRNA splicing as component of the U4/U6-U5 tri-snRNP complex that is involved in spliceosome assembly, and as component of the precatalytic spliceosome (spliceosome B complex). This is U4/U6 small nuclear ribonucleoprotein Prp3 (PRPF3) from Bos taurus (Bovine).